A 3391-amino-acid polypeptide reads, in one-letter code: Genome polyprotein (3391 aa).

The interval 1-15 (MNNQRKKAKNTPFNM) is interaction with host EXOC1. Residues 1–101 (MNNQRKKAKN…LNILNRRRRS (101 aa)) lie on the Cytoplasmic side of the membrane. A hydrophobic; homodimerization of capsid protein C region spans residues 37-72 (MLQGRGPLKLFMALVAFLRFLTIPPTAGILKRWGTI). Residues 101–114 (SAGMIIMLIPTVMA) constitute a propeptide, ER anchor for the capsid protein C, removed in mature form by serine protease NS3. Residues 102–122 (AGMIIMLIPTVMAFHLTTRNG) form a helical membrane-spanning segment. Residues 123–238 (EPHMIVSRQE…GAWKHAQRIE (116 aa)) lie on the Extracellular side of the membrane. N-linked (GlcNAc...) asparagine; by host glycosylation occurs at Asn183. The helical transmembrane segment at 239-259 (TWILRHPGFTIMAAILAYTIG) threads the bilayer. Residues 260-265 (TTHFQR) are Cytoplasmic-facing. Residues 266–280 (ALIFILLTAVAPSMT) form a helical membrane-spanning segment. At 281-725 (MRCIGISNRD…LHQVFGAIYG (445 aa)) the chain is on the extracellular side. 4 disulfide bridges follow: Cys283-Cys310, Cys340-Cys401, Cys354-Cys385, and Cys372-Cys396. Asn347 is a glycosylation site (N-linked (GlcNAc...) asparagine; by host). The tract at residues 378-391 (DRGWGNGCGLFGKG) is fusion peptide. N-linked (GlcNAc...) asparagine; by host glycosylation occurs at Asn433. 2 disulfide bridges follow: Cys465–Cys565 and Cys582–Cys613. Residues 726-746 (AAFSGVSWTMKILIGVIITWI) form a helical membrane-spanning segment. Residues 747 to 752 (GMNSRS) are Cytoplasmic-facing. The chain crosses the membrane as a helical span at residues 753–773 (TSLSVSLVLVGIVTLYLGVMV). At 774–1195 (QADSGCVVSW…MVGATMTDDI (422 aa)) the chain is on the extracellular side. Cystine bridges form between Cys779–Cys790, Cys830–Cys918, Cys954–Cys998, Cys1055–Cys1104, Cys1066–Cys1088, and Cys1087–Cys1091. 2 N-linked (GlcNAc...) asparagine; by host glycosylation sites follow: Asn905 and Asn982. Asn1134 carries N-linked (GlcNAc...) asparagine; by host glycosylation. Residues 1196-1220 (GMGVTYLALLAAFKVRPTFAAGLLL) form a helical membrane-spanning segment. Topologically, residues 1221–1226 (RKLTSK) are cytoplasmic. Residues 1227-1245 (ELMMTTIGIVLLSQSTIPE) traverse the membrane as a helical segment. Over 1246-1269 (TILELTDALALGMMVLKMVRNMEK) the chain is Lumenal. Residues 1270 to 1290 (YQLAVTIMAILCVPNAVILQN) form a helical membrane-spanning segment. Residue Ala1291 is a topological domain, cytoplasmic. The chain crosses the membrane as a helical span at residues 1292–1310 (WKVSCTILAVVSVSPLLLT). Residues 1311 to 1317 (SSQQKTD) lie on the Lumenal side of the membrane. The helical transmembrane segment at 1318 to 1338 (WIPLALTIKGLNPTAIFLTTL) threads the bilayer. Residues 1339–1346 (SRTSKKRS) lie on the Cytoplasmic side of the membrane. A helical membrane pass occupies residues 1347–1367 (WPLNEAIMAVGMVSILASSLL). Over 1368 to 1370 (KND) the chain is Lumenal. The chain crosses the membrane as a helical span at residues 1371–1391 (IPMTGPLVAGGLLTVCYVLTG). Topologically, residues 1392-1447 (RSADLELERAADVKWEDQAEISGSSPILSITISEDGSMSIKNEEEEQTLTILIRTG) are cytoplasmic. The interacts with and activates NS3 protease stretch occupies residues 1398–1437 (LERAADVKWEDQAEISGSSPILSITISEDGSMSIKNEEEE). Positions 1448-1468 (LLVISGLFPVSIPITAAAWYL) form an intramembrane region, helical. Residues 1469–2147 (WEVKKQRAGV…LSELPETLET (679 aa)) lie on the Cytoplasmic side of the membrane. Residues 1476 to 1653 (AGVLWDVPSP…EKSIEDNPEI (178 aa)) form the Peptidase S7 domain. Catalysis depends on charge relay system; for serine protease NS3 activity residues His1526, Asp1550, and Ser1610. Positions 1655 to 1811 (DDIFRKRRLT…QSNAPIIDEE (157 aa)) constitute a Helicase ATP-binding domain. Residues 1659–1662 (RKRR) form an important for RNA-binding region. 1668-1675 (LHPGAGKT) serves as a coordination point for ATP. The DEAH box signature appears at 1759–1762 (DEAH). One can recognise a Helicase C-terminal domain in the interval 1821 to 1988 (SGHEWVTDFK…IIPSMFEPER (168 aa)). Lys1863 is subject to N6-acetyllysine; by host. Residues 2148–2168 (LLLLTLLATVTGGIFLFLMSG) form a helical membrane-spanning segment. Residues 2169–2170 (RG) are Lumenal-facing. Positions 2171-2191 (IGKMTLGMCCIITASVLLWYA) form an intramembrane region, helical. A topological domain (lumenal) is located at residue Gln2192. Residues 2193–2213 (IQPHWIAASIILEFFLIVLLI) form a helical membrane-spanning segment. Over 2214 to 2228 (PEPEKQRTPQDNQLT) the chain is Cytoplasmic. A helical transmembrane segment spans residues 2229–2249 (YVVIAILTVVAATMANEMGFL). The Lumenal segment spans residues 2250–2274 (EKTKKDLGLGSIATQQPESNILDID). Positions 2275 to 2295 (LRPASAWTLYAVATTFVTPML) form an intramembrane region, helical. Topologically, residues 2296–2316 (RHSIENSSVNVSLTAIANQAT) are lumenal. N-linked (GlcNAc...) asparagine; by host glycans are attached at residues Asn2301 and Asn2305. The helical intramembrane region spans 2317–2337 (VLMGLGKGWPLSKMDIGVPLL). Over 2338–2347 (AIGCYSQVNP) the chain is Lumenal. A helical transmembrane segment spans residues 2348 to 2368 (ITLTAALLLLVAHYAIIGPGL). Residues 2369 to 2413 (QAKATREAQKRAAAGIMKNPTVDGITVIDLDPIPYDPKFEKQLGQ) are Cytoplasmic-facing. The helical transmembrane segment at 2414–2434 (VMLLVLCVTQVLMMRTTWALC) threads the bilayer. At 2435 to 2459 (EALTLATGPISTLWEGNPGRFWNTT) the chain is on the lumenal side. N-linked (GlcNAc...) asparagine; by host glycosylation occurs at Asn2457. A helical membrane pass occupies residues 2460–2480 (IAVSMANIFRGSYLAGAGLLF). The Cytoplasmic portion of the chain corresponds to 2481–3391 (SIMKNTTNTR…REEEEAGVLW (911 aa)). The region spanning 2493–2755 (TGNIGETLGE…DVDLGSGTRN (263 aa)) is the mRNA cap 0-1 NS5-type MT domain. Residue Ser2547 coordinates S-adenosyl-L-methionine. Phosphoserine is present on Ser2547. Lys2552 serves as the catalytic For 2'-O-MTase activity. Positions 2568–2571 (VVDL) match the SUMO-interacting motif motif. The S-adenosyl-L-methionine site is built by Gly2577, Trp2578, Thr2595, Lys2596, Asp2622, and Val2623. Residue Asp2637 is the For 2'-O-MTase activity of the active site. Position 2638 (Ile2638) interacts with S-adenosyl-L-methionine. Catalysis depends on for 2'-O-MTase activity residues Lys2672 and Glu2708. Tyr2710 contacts S-adenosyl-L-methionine. Residues Glu2929, His2933, Cys2938, and Cys2941 each contribute to the Zn(2+) site. The region spanning 3020 to 3169 (AMYADDTAGW…PLDDRFASAL (150 aa)) is the RdRp catalytic domain. 3 residues coordinate Zn(2+): His3203, Cys3219, and Cys3338.

In the N-terminal section; belongs to the class I-like SAM-binding methyltransferase superfamily. mRNA cap 0-1 NS5-type methyltransferase family. In terms of assembly, homodimer. Interacts (via N-terminus) with host EXOC1 (via C-terminus); this interaction results in EXOC1 degradation through the proteasome degradation pathway. Forms heterodimers with envelope protein E in the endoplasmic reticulum and Golgi. As to quaternary structure, homodimer; in the endoplasmic reticulum and Golgi. Interacts with protein prM. Interacts with non-structural protein 1. In terms of assembly, homodimer; Homohexamer when secreted. Interacts with envelope protein E. Interacts with host PRKAA1. Interacts (via N-terminus) with serine protease NS3. As to quaternary structure, forms a heterodimer with serine protease NS3. May form homooligomers. In terms of assembly, forms a heterodimer with NS2B. Interacts with NS4B. Interacts with unphosphorylated RNA-directed RNA polymerase NS5; this interaction stimulates RNA-directed RNA polymerase NS5 guanylyltransferase activity. Interacts with host SHFL. Interacts with host MAVS; this interaction inhibits the synthesis of IFN-beta. Interacts with host SHFL. Interacts with host AUP1; the interaction occurs in the presence of Dengue virus NS4B and induces lipophagy which facilitates production of virus progeny particles. May interact with host SRPRA and SEC61G. As to quaternary structure, interacts with serine protease NS3. In terms of assembly, homodimer. Interacts with host STAT2; this interaction inhibits the phosphorylation of the latter, and, when all viral proteins are present (polyprotein), targets STAT2 for degradation. Interacts with serine protease NS3. Interacts with host PAF1 complex; the interaction may prevent the recruitment of the PAF1 complex to interferon-responsive genes, and thus reduces the immune response. Post-translationally, specific enzymatic cleavages in vivo yield mature proteins. Cleavages in the lumen of endoplasmic reticulum are performed by host signal peptidase, whereas cleavages in the cytoplasmic side are performed by serine protease NS3. Signal cleavage at the 2K-4B site requires a prior NS3 protease-mediated cleavage at the 4A-2K site. In terms of processing, cleaved in post-Golgi vesicles by a host furin, releasing the mature small envelope protein M, and peptide pr. This cleavage is incomplete as up to 30% of viral particles still carry uncleaved prM. N-glycosylated. Post-translationally, N-glycosylated. The excreted form is glycosylated and this is required for efficient secretion of the protein from infected cells. In terms of processing, acetylated by host KAT5. Acetylation modulates NS3 RNA-binding and unwinding activities and plays an important positive role for viral replication. Phosphorylated on serines residues. This phosphorylation may trigger NS5 nuclear localization. Post-translationally, sumoylation of RNA-directed RNA polymerase NS5 increases NS5 protein stability allowing proper viral RNA replication.

It is found in the virion. The protein resides in the host nucleus. It localises to the host cytoplasm. The protein localises to the host perinuclear region. Its subcellular location is the secreted. It is found in the virion membrane. The protein resides in the host endoplasmic reticulum membrane. It localises to the host mitochondrion. It catalyses the reaction Selective hydrolysis of -Xaa-Xaa-|-Yaa- bonds in which each of the Xaa can be either Arg or Lys and Yaa can be either Ser or Ala.. It carries out the reaction RNA(n) + a ribonucleoside 5'-triphosphate = RNA(n+1) + diphosphate. The enzyme catalyses a ribonucleoside 5'-triphosphate + H2O = a ribonucleoside 5'-diphosphate + phosphate + H(+). The catalysed reaction is ATP + H2O = ADP + phosphate + H(+). It catalyses the reaction a 5'-end (5'-triphosphoguanosine)-ribonucleoside in mRNA + S-adenosyl-L-methionine = a 5'-end (N(7)-methyl 5'-triphosphoguanosine)-ribonucleoside in mRNA + S-adenosyl-L-homocysteine. It carries out the reaction a 5'-end (N(7)-methyl 5'-triphosphoguanosine)-ribonucleoside in mRNA + S-adenosyl-L-methionine = a 5'-end (N(7)-methyl 5'-triphosphoguanosine)-(2'-O-methyl-ribonucleoside) in mRNA + S-adenosyl-L-homocysteine + H(+). Functionally, plays a role in virus budding by binding to the cell membrane and gathering the viral RNA into a nucleocapsid that forms the core of a mature virus particle. During virus entry, may induce genome penetration into the host cytoplasm after hemifusion induced by the surface proteins. Can migrate to the cell nucleus where it modulates host functions. Overcomes the anti-viral effects of host EXOC1 by sequestering and degrading the latter through the proteasome degradation pathway. Inhibits RNA silencing by interfering with host Dicer. In terms of biological role, prevents premature fusion activity of envelope proteins in trans-Golgi by binding to envelope protein E at pH6.0. After virion release in extracellular space, gets dissociated from E dimers. Its function is as follows. Acts as a chaperone for envelope protein E during intracellular virion assembly by masking and inactivating envelope protein E fusion peptide. prM is the only viral peptide matured by host furin in the trans-Golgi network probably to avoid catastrophic activation of the viral fusion activity in acidic Golgi compartment prior to virion release. prM-E cleavage is inefficient, and many virions are only partially matured. These uncleaved prM would play a role in immune evasion. Functionally, may play a role in virus budding. Exerts cytotoxic effects by activating a mitochondrial apoptotic pathway through M ectodomain. May display a viroporin activity. Binds to host cell surface receptor and mediates fusion between viral and cellular membranes. Envelope protein is synthesized in the endoplasmic reticulum in the form of heterodimer with protein prM. They play a role in virion budding in the ER, and the newly formed immature particle is covered with 60 spikes composed of heterodimer between precursor prM and envelope protein E. The virion is transported to the Golgi apparatus where the low pH causes dissociation of PrM-E heterodimers and formation of E homodimers. prM-E cleavage is inefficient, and many virions are only partially matured. These uncleaved prM would play a role in immune evasion. In terms of biological role, involved in immune evasion, pathogenesis and viral replication. Once cleaved off the polyprotein, is targeted to three destinations: the viral replication cycle, the plasma membrane and the extracellular compartment. Essential for viral replication. Required for formation of the replication complex and recruitment of other non-structural proteins to the ER-derived membrane structures. Excreted as a hexameric lipoparticle that plays a role against host immune response. Antagonizing the complement function. Binds to the host macrophages and dendritic cells. Inhibits signal transduction originating from Toll-like receptor 3 (TLR3). Mediates complement activation, which may contribute to the pathogenesis of the vascular leakage that occurs in severe dengue disease. Activates autophagy through the AMPK/ERK/mTOR signaling pathway. Mechanistically, acts as the assembly platform for STK11-AMPK interactions and promotes STK11-AMPK interactions. In turn, promotes phosphorylation of the AMPK kinase structural domain and activates AMPK, thereby positively regulating the AMPK/ERK/mTOR signaling pathway and inducing autophagy. Its function is as follows. Disrupts the host endothelial glycocalyx layer of host pulmonary microvascular endothelial cells, inducing degradation of sialic acid and shedding of heparan sulfate proteoglycans. NS1 induces expression of sialidases, heparanase, and activates cathepsin L, which activates heparanase via enzymatic cleavage. These effects are probably linked to the endothelial hyperpermeability observed in severe dengue disease. Functionally, component of the viral RNA replication complex that functions in virion assembly and antagonizes the host immune response. Required cofactor for the serine protease function of NS3. May have membrane-destabilizing activity and form viroporins. In terms of biological role, displays three enzymatic activities: serine protease, NTPase and RNA helicase. NS3 serine protease, in association with NS2B, performs its autocleavage and cleaves the polyprotein at dibasic sites in the cytoplasm: C-prM, NS2A-NS2B, NS2B-NS3, NS3-NS4A, NS4A-2K and NS4B-NS5. NS3 RNA helicase binds RNA and unwinds dsRNA in the 3' to 5' direction. Its function is as follows. Regulates the ATPase activity of the NS3 helicase activity. NS4A allows NS3 helicase to conserve energy during unwinding. Plays a role in the inhibition of the host innate immune response. Interacts with host MAVS and thereby prevents the interaction between RIGI and MAVS. In turn, IFN-beta production is impaired. Interacts with host AUP1 which mediates induction of lipophagy in host cells and facilitates production of virus progeny particles. Functionally, functions as a signal peptide for NS4B and is required for the interferon antagonism activity of the latter. Induces the formation of ER-derived membrane vesicles where the viral replication takes place. Inhibits interferon (IFN)-induced host STAT1 phosphorylation and nuclear translocation, thereby preventing the establishment of cellular antiviral state by blocking the IFN-alpha/beta pathway. In terms of biological role, replicates the viral (+) and (-) RNA genome, and performs the capping of genomes in the cytoplasm. NS5 methylates viral RNA cap at guanine N-7 and ribose 2'-O positions. Besides its role in RNA genome replication, also prevents the establishment of cellular antiviral state by blocking the interferon-alpha/beta (IFN-alpha/beta) signaling pathway. Inhibits host TYK2 and STAT2 phosphorylation, thereby preventing activation of JAK-STAT signaling pathway. May reduce immune responses by preventing the recruitment of the host PAF1 complex to interferon-responsive genes. The polypeptide is Genome polyprotein (Aedimorphus (Red guenon)).